The following is a 725-amino-acid chain: Probable dipeptidyl-peptidase 5 (725 aa).

Residues 1–18 (MGALRWLSIAATASTALA) form the signal peptide. N-linked (GlcNAc...) asparagine glycosylation is found at asparagine 75, asparagine 96, asparagine 153, asparagine 258, asparagine 383, and asparagine 453. Serine 563 serves as the catalytic Charge relay system. Asparagine 610 carries an N-linked (GlcNAc...) asparagine glycan. Active-site charge relay system residues include aspartate 646 and histidine 678.

This sequence belongs to the peptidase S9C family.

The protein resides in the secreted. Extracellular dipeptidyl-peptidase which removes N-terminal dipeptides sequentially from polypeptides having unsubstituted N-termini. This chain is Probable dipeptidyl-peptidase 5 (dpp5), found in Aspergillus flavus (strain ATCC 200026 / FGSC A1120 / IAM 13836 / NRRL 3357 / JCM 12722 / SRRC 167).